A 280-amino-acid polypeptide reads, in one-letter code: Golgi phosphoprotein 3-like B (280 aa).

The interval 1 to 32 is disordered; sequence MTTLIRRGRRAEEGQERRADSEDSIKDKDEED. Residues 10-32 are compositionally biased toward basic and acidic residues; it reads RAEEGQERRADSEDSIKDKDEED. 4 residues coordinate a 1,2-diacyl-sn-glycero-3-phospho-(1D-myo-inositol 4-phosphate): tryptophan 62, arginine 71, arginine 152, and arginine 155. Positions 171-182 are beta-hairpin required for oligomerization; sequence EKQNFLLFDMTT.

Belongs to the GOLPH3/VPS74 family. Homooligomer.

It localises to the golgi apparatus. The protein resides in the golgi stack membrane. The protein localises to the trans-Golgi network membrane. Its function is as follows. Phosphatidylinositol-4-phosphate-binding protein that may play a role in the process of vesicle budding at the Golgi and anterograde transport to the plasma membrane. The chain is Golgi phosphoprotein 3-like B (golph3l-b) from Xenopus laevis (African clawed frog).